The sequence spans 344 residues: E3 ubiquitin-protein ligase RING2-A (344 aa).

Residues 2–181 (ATPVNAQCSS…EDNCDSRSHV (180 aa)) form an interaction with HIP2 region. The segment at 48-88 (CPICLDMLKNTMTTKECLHRFCSDCIVTALRSGNKECPTCR) adopts an RING-type zinc-finger fold. The interaction with nucleosomes via an acidic patch on histone H2A and histone H2B stretch occupies residues 90–95 (KLVSKR). The disordered stretch occupies residues 148-230 (QAMHRAQRVR…DPPGGGETGS (83 aa)). Residues 180-192 (HVSNPSVHSNQEA) show a composition bias toward polar residues.

Component of chromatin-associated Polycomb (PcG) complexes. Component of a PRC1-like complex. Component of some MLL1/MLL complex.

It localises to the nucleus. It is found in the cytoplasm. Its subcellular location is the chromosome. It carries out the reaction S-ubiquitinyl-[E2 ubiquitin-conjugating enzyme]-L-cysteine + [acceptor protein]-L-lysine = [E2 ubiquitin-conjugating enzyme]-L-cysteine + N(6)-ubiquitinyl-[acceptor protein]-L-lysine.. It functions in the pathway protein modification; protein ubiquitination. Its function is as follows. E3 ubiquitin-protein ligase that mediates monoubiquitination of 'Lys-119' of histone H2A (H2AK119Ub), thereby playing a central role in histone code and gene regulation. H2AK119Ub gives a specific tag for epigenetic transcriptional repression. Essential component of a Polycomb group (PcG) multiprotein PRC1-like complex, a complex class required to maintain the transcriptionally repressive state of many genes, including Hox genes, throughout development. PcG PRC1 complex acts via chromatin remodeling and modification of histones, rendering chromatin heritably changed in its expressibility. This Xenopus laevis (African clawed frog) protein is E3 ubiquitin-protein ligase RING2-A (rnf2-a).